The primary structure comprises 240 residues: Large ribosomal subunit protein uL2 (240 aa).

Over residues 1–12 (MGRRIQGQRRGR) the composition is skewed to basic residues. 2 disordered regions span residues 1-21 (MGRRIQGQRRGRGGPTFRAPS) and 198-240 (VDHP…GSNK). The span at 221–231 (PPGRKVGDIAS) shows a compositional bias: basic and acidic residues.

It belongs to the universal ribosomal protein uL2 family. Part of the 50S ribosomal subunit. Forms a bridge to the 30S subunit in the 70S ribosome.

One of the primary rRNA binding proteins. Required for association of the 30S and 50S subunits to form the 70S ribosome, for tRNA binding and peptide bond formation. It has been suggested to have peptidyltransferase activity; this is somewhat controversial. Makes several contacts with the 16S rRNA in the 70S ribosome. The protein is Large ribosomal subunit protein uL2 of Halorubrum lacusprofundi (strain ATCC 49239 / DSM 5036 / JCM 8891 / ACAM 34).